The primary structure comprises 228 residues: uncharacterized protein (228 aa).

The interval 90–115 (TDESEESSSANNTTTTASHTLSNSKK) is disordered. Low complexity predominate over residues 96 to 113 (SSSANNTTTTASHTLSNS).

It localises to the cytoplasm. The protein localises to the cell cortex. Deletion results in antifungal drug fluconazole-resistant phenotype. This is an uncharacterized protein from Saccharomyces cerevisiae (strain ATCC 204508 / S288c) (Baker's yeast).